A 339-amino-acid polypeptide reads, in one-letter code: Bifunctional NMN adenylyltransferase/Nudix hydrolase (339 aa).

The tract at residues 1 to 183 (MQTKYQYGIY…RYIALCDEYQ (183 aa)) is NMN adenylyltransferase. In terms of domain architecture, Nudix hydrolase spans 199 to 335 (PTFITTDAVV…EDHFQIIQHF (137 aa)). The Nudix box motif lies at 233–254 (GFIKQNETLVEGMLRELKEETR).

The protein in the N-terminal section; belongs to the archaeal NMN adenylyltransferase family. Mg(2+) serves as cofactor. It depends on Mn(2+) as a cofactor.

It localises to the cytoplasm. It catalyses the reaction beta-nicotinamide D-ribonucleotide + ATP + H(+) = diphosphate + NAD(+). It participates in cofactor biosynthesis; NAD(+) biosynthesis; NAD(+) from nicotinamide D-ribonucleotide: step 1/1. Functionally, the Nudix hydrolase domain is active on ADP-ribose, (2')-phospho-ADP-ribose, IDP-ribose and NADPH. This is Bifunctional NMN adenylyltransferase/Nudix hydrolase from Synechocystis sp. (strain ATCC 27184 / PCC 6803 / Kazusa).